A 187-amino-acid polypeptide reads, in one-letter code: BCL2/adenovirus E1B 19 kDa protein-interacting protein 3 (187 aa).

Residues 42-86 (LDAQHESGRSSSKSSHCDSPPRSQTPQDTNRAEIDSHSFGEKNST) are disordered. Phosphoserine occurs at positions 48, 60, 77, 79, 85, and 88. Positions 50 to 63 (RSSSKSSHCDSPPR) are enriched in low complexity. Positions 71–81 (NRAEIDSHSFG) are enriched in basic and acidic residues. The BH3 signature appears at 93–118 (IERRREVESILKKNSDWIWDWSSRPE). A helical membrane pass occupies residues 157–177 (VFLPSLLLSHLLAIGLGIYIG).

Belongs to the NIP3 family. Homodimer. Binds to BCL2. Interacts with BNIP3L and ACAA2. Interacts (via BH3 domain) with SPATA18 (via coiled-coil domains). Interacts with BOK; promotes BOK oligomerization. Interacts with PPTC7; this interaction promotes BNIP3 degradation.

It is found in the mitochondrion. Its subcellular location is the mitochondrion outer membrane. Its function is as follows. Apoptosis-inducing protein that can overcome BCL2 suppression. May play a role in repartitioning calcium between the two major intracellular calcium stores in association with BCL2. Involved in mitochondrial quality control via its interaction with SPATA18/MIEAP: in response to mitochondrial damage, participates in mitochondrial protein catabolic process (also named MALM) leading to the degradation of damaged proteins inside mitochondria. The physical interaction of SPATA18/MIEAP, BNIP3 and BNIP3L/NIX at the mitochondrial outer membrane may play a critical role in the translocation of lysosomal proteins from the cytoplasm to the mitochondrial matrix. The physical interaction of SPATA18/MIEAP, BNIP3 and BNIP3L/NIX at the mitochondrial outer membrane regulates the opening of a pore in the mitochondrial double membrane in order to mediate the translocation of lysosomal proteins from the cytoplasm to the mitochondrial matrix. Plays an important role in the calprotectin (S100A8/A9)-induced cell death pathway. This Mus musculus (Mouse) protein is BCL2/adenovirus E1B 19 kDa protein-interacting protein 3.